The following is a 494-amino-acid chain: Ketol-acid reductoisomerase (NADP(+)) (494 aa).

Residues 14 to 208 (LEQLGKCRFM…GGHRAGVLQS (195 aa)) form the KARI N-terminal Rossmann domain. NADP(+)-binding positions include 45-48 (CGAQ), arginine 68, arginine 76, serine 78, and 108-110 (DKQ). The active site involves histidine 132. Residue glycine 158 participates in NADP(+) binding. KARI C-terminal knotted domains lie at 209–344 (SFVA…NAPA) and 345–487 (FDGA…MKDM). Mg(2+)-binding residues include aspartate 217, glutamate 221, glutamate 389, and glutamate 393. Substrate is bound at residue serine 414.

It belongs to the ketol-acid reductoisomerase family. Requires Mg(2+) as cofactor.

It carries out the reaction (2R)-2,3-dihydroxy-3-methylbutanoate + NADP(+) = (2S)-2-acetolactate + NADPH + H(+). The enzyme catalyses (2R,3R)-2,3-dihydroxy-3-methylpentanoate + NADP(+) = (S)-2-ethyl-2-hydroxy-3-oxobutanoate + NADPH + H(+). It participates in amino-acid biosynthesis; L-isoleucine biosynthesis; L-isoleucine from 2-oxobutanoate: step 2/4. It functions in the pathway amino-acid biosynthesis; L-valine biosynthesis; L-valine from pyruvate: step 2/4. In terms of biological role, involved in the biosynthesis of branched-chain amino acids (BCAA). Catalyzes an alkyl-migration followed by a ketol-acid reduction of (S)-2-acetolactate (S2AL) to yield (R)-2,3-dihydroxy-isovalerate. In the isomerase reaction, S2AL is rearranged via a Mg-dependent methyl migration to produce 3-hydroxy-3-methyl-2-ketobutyrate (HMKB). In the reductase reaction, this 2-ketoacid undergoes a metal-dependent reduction by NADPH to yield (R)-2,3-dihydroxy-isovalerate. The protein is Ketol-acid reductoisomerase (NADP(+)) of Tolumonas auensis (strain DSM 9187 / NBRC 110442 / TA 4).